The primary structure comprises 442 residues: MNAVVIAVLLMLVLSLLRVNIVIALIIGALAGGLTGGLGLGETVKAFTDGLGGNATVAVSYAMLGAFAAALTKTGLPDAMVEASVKLIGNKEDSRKKALSKVLIVLIILIVSCFSQNVVPVHIAFIPVLIPPLLKIFNELEMDRRLIACVITFGLTAPYILLPVGFGQIFQGMLKDNMADAGLNVPLADIPYALIIPVAGMVVGLILSVIVYRKPKQYETKDISGAEASPYTRKSIGIAVLAIVVSLGVQLYLSQTLGVEGMIMGALAGLIVLFVSGVMKRDEADSLITDGMVLMAFIGFVMLVAAGFSNVLTKTGDVESLVKTSAGFIGHSQSLGALLMLIVGLLITMGIGSSFATIPVITTIFVPLCMQLGFSPMATIAIIGAAAALGDAGSPASDSTLGPTSGLSADGQHHHIWDTCVPTFIFYNIPLVIFGWIAALVL.

Helical transmembrane passes span 21–41 (IVIALIIGALAGGLTGGLGLG), 51–71 (LGGNATVAVSYAMLGAFAAAL), 103–123 (LIVLIILIVSCFSQNVVPVHI), 146–166 (LIACVITFGLTAPYILLPVGF), 190–210 (IPYALIIPVAGMVVGLILSVI), 236–256 (IGIAVLAIVVSLGVQLYLSQT), 259–279 (VEGMIMGALAGLIVLFVSGVM), 292–312 (MVLMAFIGFVMLVAAGFSNVL), 335–355 (LGALLMLIVGLLITMGIGSSF), 364–384 (IFVPLCMQLGFSPMATIAIIG), and 421–441 (VPTFIFYNIPLVIFGWIAALV).

It localises to the cell membrane. The polypeptide is Putative amino acid transporter YuiF (yuiF) (Bacillus subtilis (strain 168)).